Consider the following 37-residue polypeptide: Large ribosomal subunit protein bL36 (37 aa).

This sequence belongs to the bacterial ribosomal protein bL36 family.

The chain is Large ribosomal subunit protein bL36 from Micrococcus luteus (strain ATCC 4698 / DSM 20030 / JCM 1464 / CCM 169 / CCUG 5858 / IAM 1056 / NBRC 3333 / NCIMB 9278 / NCTC 2665 / VKM Ac-2230) (Micrococcus lysodeikticus).